The sequence spans 148 residues: Ribosome maturation factor RimP (148 aa).

The protein belongs to the RimP family.

The protein resides in the cytoplasm. Functionally, required for maturation of 30S ribosomal subunits. In Thermosipho africanus (strain TCF52B), this protein is Ribosome maturation factor RimP.